Consider the following 402-residue polypeptide: B box and SPRY domain-containing protein (402 aa).

The disordered stretch occupies residues 1–20; it reads MSAEGAEPGPGSGSGPGPGP. Residues 17–65 form a B box-type zinc finger; sequence GPGPLCPEHGQALSWFCGSERRPVCAACAGLGGRCRGHRIRRAEERAEE. Positions 212-402 constitute a B30.2/SPRY domain; it reads PLLTQLWATA…VADQTISIVR (191 aa).

As to quaternary structure, interacts with TRPV5 and TRPV6. Interacts with YWHAZ/14-3-3 protein zeta.

It localises to the cytoplasm. It is found in the membrane. Its function is as follows. May regulate epithelial calcium transport by inhibiting TRPV5 activity. This Homo sapiens (Human) protein is B box and SPRY domain-containing protein (BSPRY).